We begin with the raw amino-acid sequence, 310 residues long: 4-hydroxyproline 2-epimerase (310 aa).

Catalysis depends on C88, which acts as the Proton acceptor. Substrate-binding positions include 89–90 (GH), H208, and D232. C236 functions as the Proton donor in the catalytic mechanism. 237–238 (GT) serves as a coordination point for substrate.

The protein belongs to the proline racemase family.

It carries out the reaction trans-4-hydroxy-L-proline = cis-4-hydroxy-D-proline. Catalyzes the epimerization of trans-4-hydroxy-L-proline (t4LHyp) to cis-4-hydroxy-D-proline (c4DHyp). Is likely involved in a degradation pathway that converts t4LHyp to alpha-ketoglutarate. Displays no proline racemase activity. This is 4-hydroxyproline 2-epimerase from Burkholderia cenocepacia (strain ATCC BAA-245 / DSM 16553 / LMG 16656 / NCTC 13227 / J2315 / CF5610) (Burkholderia cepacia (strain J2315)).